Reading from the N-terminus, the 493-residue chain is Putative trans-acting regulator SP_1800 (493 aa).

It belongs to the AtxA/AcpA family.

This Streptococcus pneumoniae serotype 4 (strain ATCC BAA-334 / TIGR4) protein is Putative trans-acting regulator SP_1800.